The following is a 298-amino-acid chain: HTH-type transcriptional regulator ArgP (298 aa).

The 57-residue stretch at 4-60 folds into the HTH lysR-type domain; it reads LDYKWIEALDAVVAQGGFERAAEELYISQSAVSQRIKQLERFLAQPVLIREQPPKPT. Residues 21–40 constitute a DNA-binding region (H-T-H motif); it reads FERAAEELYISQSAVSQRIK.

This sequence belongs to the LysR transcriptional regulatory family. As to quaternary structure, homodimer.

In terms of biological role, controls the transcription of genes involved in arginine and lysine metabolism. This is HTH-type transcriptional regulator ArgP from Vibrio vulnificus (strain CMCP6).